A 753-amino-acid polypeptide reads, in one-letter code: Fatty acid oxidation complex subunit alpha (753 aa).

The segment at 8 to 197 is enoyl-CoA hydratase; that stretch reads SVTHPAFTLN…KMGLVDDVVP (190 aa). The interval 313–747 is 3-hydroxyacyl-CoA dehydrogenase; that stretch reads RAIHRVGVLG…FYPVDANIDE (435 aa). A disordered region spans residues 593–622; the sequence is SNPTLHSNSTKNSSPTKNGNSPAKRNSFKW. Positions 599–614 are enriched in low complexity; it reads SNSTKNSSPTKNGNSP.

The protein in the N-terminal section; belongs to the enoyl-CoA hydratase/isomerase family. In the central section; belongs to the 3-hydroxyacyl-CoA dehydrogenase family. As to quaternary structure, heterotetramer of two alpha chains (FadJ) and two beta chains (FadI).

The protein resides in the cytoplasm. It carries out the reaction a (3S)-3-hydroxyacyl-CoA = a (2E)-enoyl-CoA + H2O. It catalyses the reaction a 4-saturated-(3S)-3-hydroxyacyl-CoA = a (3E)-enoyl-CoA + H2O. The enzyme catalyses a (3S)-3-hydroxyacyl-CoA + NAD(+) = a 3-oxoacyl-CoA + NADH + H(+). The catalysed reaction is (3S)-3-hydroxybutanoyl-CoA = (3R)-3-hydroxybutanoyl-CoA. It functions in the pathway lipid metabolism; fatty acid beta-oxidation. Its function is as follows. Catalyzes the formation of a hydroxyacyl-CoA by addition of water on enoyl-CoA. Also exhibits 3-hydroxyacyl-CoA epimerase and 3-hydroxyacyl-CoA dehydrogenase activities. This chain is Fatty acid oxidation complex subunit alpha, found in Yersinia pseudotuberculosis serotype I (strain IP32953).